Here is a 160-residue protein sequence, read N- to C-terminus: Putative NrdI-like protein (160 aa).

The protein belongs to the NrdI family.

This chain is Putative NrdI-like protein, found in Streptococcus pyogenes serotype M1.